We begin with the raw amino-acid sequence, 76 residues long: MQLVLAAKYIGAGISTIGLLGAGIGIAIVFAALINGVSRNPSIKDTVFPMAILGFALSEATGLFCLMVSFLLLFGV.

M1 carries the N-formylmethionine modification. 2 helical membrane-spanning segments follow: residues I14 to I34 and I52 to L72.

This sequence belongs to the ATPase C chain family. As to quaternary structure, F-type ATPases have 2 components, CF(1) - the catalytic core - and CF(0) - the membrane proton channel. In yeast, the dimeric form of ATP synthase consists of 18 polypeptides: alpha, beta, gamma, delta, epsilon, 4 (B), 5 (OSCP), 6 (A), 8, 9 (C), d, E (Tim11), f, g, h, i, j and k.

Its subcellular location is the mitochondrion membrane. Its function is as follows. Mitochondrial membrane ATP synthase (F(1)F(0) ATP synthase or Complex V) produces ATP from ADP in the presence of a proton gradient across the membrane which is generated by electron transport complexes of the respiratory chain. F-type ATPases consist of two structural domains, F(1) - containing the extramembraneous catalytic core and F(0) - containing the membrane proton channel, linked together by a central stalk and a peripheral stalk. During catalysis, ATP synthesis in the catalytic domain of F(1) is coupled via a rotary mechanism of the central stalk subunits to proton translocation. Part of the complex F(0) domain. A homomeric c-ring of probably 10 subunits is part of the complex rotary element. The sequence is that of ATP synthase subunit 9, mitochondrial (ATP9) from Saccharomyces paradoxus (Yeast).